Consider the following 134-residue polypeptide: MAGENTSRRTGSARLDEVIPEFELVSTDVKILAEKYLQDERIYRIWFEYLIPDEIDLIFPTTDGKLNYLSFTKRLASAIRYGRIKTAVSNNSSSNSYGSTEHVCDHGTSLCGRSERFASVINRFLDLHQILKDC.

The protein belongs to the herpesviridae TRM2 protein family. As to quaternary structure, associates with TRM1 and TRM3 to form the tripartite terminase complex.

The protein resides in the host nucleus. Component of the molecular motor that translocates viral genomic DNA in empty capsid during DNA packaging. Forms a tripartite terminase complex together with TRM1 and TRM3 in the host cytoplasm. Once the complex reaches the host nucleus, it interacts with the capsid portal vertex. This portal forms a ring in which genomic DNA is translocated into the capsid. The protein is Tripartite terminase subunit 2 of Gallus gallus (Chicken).